Here is a 1840-residue protein sequence, read N- to C-terminus: Neurexin 1 (1840 aa).

Residues 1-50 (MKAPHSATYQDNYADAAMTARTRPSMDMDQQRNRNQAELRLLPAQRTSTS) are disordered. Topologically, residues 1–1696 (MKAPHSATYQ…NSIEEERTAM (1696 aa)) are extracellular. Over residues 24 to 37 (PSMDMDQQRNRNQA) the composition is skewed to basic and acidic residues. A Laminin G-like 1 domain is found at 104–289 (GFQLDGSQNS…RDIKCGDVPC (186 aa)). In terms of domain architecture, EGF-like 1 spans 309–347 (TTDACERNDPCQHGGICISTDSGPICECRNLEYDGQYCE). 8 disulfide bridges follow: Cys313-Cys325, Cys319-Cys334, Cys336-Cys346, Cys511-Cys547, Cys710-Cys739, Cys746-Cys757, Cys751-Cys766, and Cys768-Cys778. 2 Laminin G-like domains span residues 352–547 (PSEA…EYQC) and 554–739 (DPVT…KPSC). Residues 742-779 (QANVCNGNPCLNGGTCLEGWNRPICDCSATLYGGPTCG) form the EGF-like 2 domain. 2 consecutive Laminin G-like domains span residues 784–964 (TLAF…LPSA) and 982–1158 (HAAT…VSGC). 4 disulfide bridges follow: Cys1130-Cys1158, Cys1164-Cys1175, Cys1169-Cys1184, and Cys1186-Cys1196. The EGF-like 3 domain maps to 1160 to 1197 (GPTKCSQNACANRGNCVQQWNAYACECDMTSYTGPTCY). A Laminin G-like 6 domain is found at 1201–1416 (IAYEFGNNKG…LIFSGAGSGC (216 aa)). The disordered stretch occupies residues 1411-1651 (GAGSGCRGDD…DEHHPLPPLP (241 aa)). The segment covering 1447–1472 (QTTTSQQGNSLSTGGSSSGGVITNGT) has biased composition (low complexity). The span at 1491–1527 (TTEQFTSTSTARGSESNNEMVTITTTGRSDVTTEQHQ) shows a compositional bias: polar residues. Positions 1528–1600 (GSSSSSSSGS…TTTTTTTTQA (73 aa)) are enriched in low complexity. Residues 1632 to 1646 (RNDHDRMQLPDEHHP) show a composition bias toward basic and acidic residues. Residues 1697-1717 (IIGIVAGILIAVVLVILLVLW) traverse the membrane as a helical segment. The Cytoplasmic portion of the chain corresponds to 1718–1840 (LKSNGDRGYK…DSKDVKEWYV (123 aa)). Residues 1737 to 1840 (GSHNPNAALL…DSKDVKEWYV (104 aa)) form a disordered region. Residues 1747–1757 (GNTSTNGSYHQ) show a composition bias toward polar residues. Positions 1774 to 1787 (QQQHHAQQQMHNGH) are enriched in low complexity. Positions 1788–1813 (NGNGNGGGGGGGGMMSSGSGSLGYGS) are enriched in gly residues. Zn(2+) contacts are provided by Asp1831 and Asp1834. Basic and acidic residues predominate over residues 1831-1840 (DSKDVKEWYV). The short motif at 1837–1840 (EWYV) is the PDZ domain binding element.

This sequence belongs to the neurexin family. As to quaternary structure, interacts (via C-terminal PDZ binding motif) with CASK (via PDZ domain). Interacts (via cytoplasmic domain) with apolpp/ApoLI; the interaction supports apolpp/ApoLI protein stability. Interact (via cytoplasmic domain) with Spn/Spinophilin. Interacts with RhoGAP100F/Syd-1 (via PDZ domain); RhoGAP100F/Syd-1 may recruit Nrx-1 to the presynaptic active zone. In terms of tissue distribution, expressed in brain, with expression in medulla, lamina, lobula, lobula plate, mushroom body and antennal lobe, and in retina (at protein level). Expressed in rabdomere of photoreceptor cells (at protein level).

It is found in the synaptic cell membrane. The protein resides in the presynaptic cell membrane. It localises to the postsynaptic cell membrane. Its function is as follows. Neuronal cell adhesion protein involved in synapse formation, development of synaptic active zones, synaptic regulation and visual function. Plays a role in cell adhesion between the pre- and the postsynaptic cell. Required for proper proliferation of synaptic boutons during larval development, a process necessary for coordinated matching of pre-and postsynaptic compartments. Promotes presynaptic active zone formation and neurotransmitter release. Spn/Spinophilin fine-tunes nrx-1/nlg1 signaling at the pre-synapse to control active zone number and functionality and thereby optimizing action potential-induced exocytosis. Required for synapse formation in central nervous system. By regulating synapse formation, may play a role in larval associative learning. Together with RhoGAP100F/syd-1, controls synapse formation at the neuromuscular junction. Essential for synaptic vesicle cycling, which plays critical roles in neurotransmission at neuromuscular junctions (NMJ). Regulated and restricts formation of glutamate receptor clusters. Mediates retinoid transport and subsequent rhodopsin maturation and may regulate lipoprotein function; thereby playing a role in vision. Regulates sleep, circadian rhythm and synaptic plasticity. Together with CASK, required for locomotion. The chain is Neurexin 1 from Drosophila melanogaster (Fruit fly).